A 2145-amino-acid chain; its full sequence is Glutamate synthase [NADH] (2145 aa).

A propeptide spanning residues 1–53 (MPVLKSDNFDPLEEAYEGGTIQNYNDEHHLHKSWANVIPDKRGLYDPDYEHDA) is cleaved from the precursor. Residue C54 is the For GATase activity of the active site. The Glutamine amidotransferase type-2 domain occupies 54 to 455 (CGVGFVANKH…PGDLFLVDTQ (402 aa)). 1132–1189 (LAETHQTLVLNDLRRNVVVQTDGQLRTGFDIAVAVLLGAESFTLATVPLIAMGCVMLR) lines the FMN pocket. Residues C1185, C1191, and C1196 each contribute to the [3Fe-4S] cluster site. Residues 1551–1600 (KKVLLKEKAEAAKAKAKATSEYLKKFRSNQEVDDEVNTLLIANQKAKEQE) adopt a coiled-coil conformation. 1928–1942 (GGGDTGNDCLGTSVR) contacts NAD(+). T2070 is subject to Phosphothreonine.

This sequence belongs to the glutamate synthase family. As to quaternary structure, homotrimer. [3Fe-4S] cluster serves as cofactor. Requires FAD as cofactor. The cofactor is FMN.

The enzyme catalyses 2 L-glutamate + NAD(+) = L-glutamine + 2-oxoglutarate + NADH + H(+). It functions in the pathway amino-acid biosynthesis; L-glutamate biosynthesis via GLT pathway; L-glutamate from 2-oxoglutarate and L-glutamine (NAD(+) route): step 1/1. The protein operates within energy metabolism; nitrogen metabolism. With respect to regulation, inhibited by homocysteine sulfonamide. Forms L-glutamate from L-glutamine and 2-oxoglutarate. Represents an alternative pathway to L-glutamate dehydrogenase for the biosynthesis of L-glutamate. Participates with glutamine synthetase in ammonia assimilation processes. The enzyme is specific for NADH, L-glutamine and 2-oxoglutarate. The protein is Glutamate synthase [NADH] (GLT1) of Saccharomyces cerevisiae (strain ATCC 204508 / S288c) (Baker's yeast).